Reading from the N-terminus, the 100-residue chain is Elastin (100 aa).

A 4-hydroxyproline mark is found at Pro72 and Pro86. The cysteines at positions 90 and 95 are disulfide-linked.

It belongs to the elastin family. As to quaternary structure, the polymeric elastin chains are cross-linked together into an extensible 3D network. Forms a ternary complex with BGN and MFAP2. Interacts with MFAP2 via divalent cations (calcium &gt; magnesium &gt; manganese) in a dose-dependent and saturating manner. Interacts with FBLN5 and FBN1. Forms a ternary complex with FBN1 and FBLN2 or FBLN5. Interacts with MFAP4 in a Ca (2+)-dependent manner; this interaction promotes ELN self-assembly. Interacts with EFEMP2 with moderate affinity. Post-translationally, elastin is formed through the cross-linking of its soluble precursor tropoelastin. Cross-linking is initiated through the action of lysyl oxidase on exposed lysines to form allysine. Subsequent spontaneous condensation reactions with other allysine or unmodified lysine residues result in various bi-, tri-, and tetrafunctional cross-links. The most abundant cross-links in mature elastin fibers are lysinonorleucine, allysine aldol, desmosine, and isodesmosine. In terms of processing, hydroxylation on proline residues within the sequence motif, GXPG, is most likely to be 4-hydroxy as this fits the requirement for 4-hydroxylation in vertebrates.

It is found in the secreted. The protein resides in the extracellular space. The protein localises to the extracellular matrix. In terms of biological role, major structural protein of tissues such as aorta and nuchal ligament, which must expand rapidly and recover completely. Molecular determinant of the late arterial morphogenesis, stabilizing arterial structure by regulating proliferation and organization of vascular smooth muscle. The chain is Elastin (ELN) from Ovis aries (Sheep).